Reading from the N-terminus, the 613-residue chain is Myrcene synthase, chloroplastic (613 aa).

A chloroplast-targeting transit peptide spans 1–46 (MQCMAVHQFAPLLSLLNCSRISSDFGRLFTPKTSTKSRSSTCHPIQ). (2E)-geranyl diphosphate-binding residues include Arg-324, Asp-361, and Asp-365. Mg(2+) is bound by residues Asp-361 and Asp-365. The DDXXD motif signature appears at 361-365 (DDIYD). A helical membrane pass occupies residues 455-475 (IEMAWLSIGGPVILVHAYFCF). Residues Arg-503 and Asp-506 each coordinate (2E)-geranyl diphosphate. Mg(2+) is bound by residues Asp-506, Thr-510, and Glu-514.

This sequence belongs to the terpene synthase family. Tpsb subfamily. Mg(2+) serves as cofactor. Mn(2+) is required as a cofactor. Expressed in trichomes.

The protein localises to the plastid. It is found in the chloroplast membrane. The enzyme catalyses (2E)-geranyl diphosphate = beta-myrcene + diphosphate. Its pathway is secondary metabolite biosynthesis; terpenoid biosynthesis. In terms of biological role, monoterpene synthase that catalyzes the formation of myrcene. Can use geranyl diphosphate as substrate, but not farnesyl diphosphate or geranylgeranyl diphosphate. The protein is Myrcene synthase, chloroplastic of Humulus lupulus (European hop).